An 888-amino-acid polypeptide reads, in one-letter code: Molybdenum cofactor sulfurase (888 aa).

Phosphoserine is present on serine 34. Lysine 264 bears the N6-(pyridoxal phosphate)lysine mark. Residue cysteine 424 is part of the active site. Serine 528 and serine 530 each carry phosphoserine. The MOSC domain occupies 706-867 (KQSSNSQRNA…LSVGSQVLPV (162 aa)).

This sequence belongs to the class-V pyridoxal-phosphate-dependent aminotransferase family. MOCOS subfamily. Pyridoxal 5'-phosphate is required as a cofactor.

The catalysed reaction is Mo-molybdopterin + L-cysteine + AH2 = thio-Mo-molybdopterin + L-alanine + A + H2O. It functions in the pathway cofactor biosynthesis; molybdopterin biosynthesis. Functionally, sulfurates the molybdenum cofactor. Sulfation of molybdenum is essential for xanthine dehydrogenase (XDH) and aldehyde oxidase (ADO) enzymes in which molybdenum cofactor is liganded by 1 oxygen and 1 sulfur atom in active form. In vitro, the C-terminal domain is able to reduce N-hydroxylated prodrugs, such as benzamidoxime. This chain is Molybdenum cofactor sulfurase, found in Homo sapiens (Human).